Reading from the N-terminus, the 178-residue chain is MRRPFRATPVQKDGPRSNRDIRVPRVQLIDAEGQNHGDVSIQEAMAMAEEAGLDLVEIVPNAEPPVCKIVDLGKLKYQNQKKAAEARKKQKTVEIKEIKMRPNIDTHDYEVKMKAAQRFFEEGDKVKVTLRFRGREMAHQELGMKLLQRVKEDTVEIAKVESEPKLEGRQMMMVLAPR.

The disordered stretch occupies residues 1-20; that stretch reads MRRPFRATPVQKDGPRSNRD.

It belongs to the IF-3 family. Monomer.

The protein resides in the cytoplasm. Functionally, IF-3 binds to the 30S ribosomal subunit and shifts the equilibrium between 70S ribosomes and their 50S and 30S subunits in favor of the free subunits, thus enhancing the availability of 30S subunits on which protein synthesis initiation begins. This Brucella abortus biovar 1 (strain 9-941) protein is Translation initiation factor IF-3.